A 757-amino-acid chain; its full sequence is 5-methyltetrahydropteroyltriglutamate--homocysteine methyltransferase (757 aa).

The 5-methyltetrahydropteroyltri-L-glutamate site is built by lysine 18 and asparagine 116. Position 437–439 (437–439 (IGS)) interacts with L-homocysteine. L-methionine is bound by residues 437 to 439 (IGS) and glutamate 490. Residues 521–522 (RC) and tryptophan 567 each bind 5-methyltetrahydropteroyltri-L-glutamate. Residue aspartate 605 participates in L-homocysteine binding. Aspartate 605 lines the L-methionine pocket. Residues histidine 647, cysteine 649, histidine 658, aspartate 662, and glutamate 671 each contribute to the Zn(2+) site. Histidine 701 acts as the Proton donor in catalysis. Residue cysteine 733 coordinates Zn(2+).

Belongs to the vitamin-B12 independent methionine synthase family. Requires Zn(2+) as cofactor. As to expression, expressed in pollen (at protein level).

It catalyses the reaction 5-methyltetrahydropteroyltri-L-glutamate + L-homocysteine = tetrahydropteroyltri-L-glutamate + L-methionine. Its pathway is amino-acid biosynthesis; L-methionine biosynthesis via de novo pathway; L-methionine from L-homocysteine (MetE route): step 1/1. Catalyzes the transfer of a methyl group from 5-methyltetrahydrofolate to homocysteine resulting in methionine formation. This Kali turgidum (Prickly saltwort) protein is 5-methyltetrahydropteroyltriglutamate--homocysteine methyltransferase.